The sequence spans 338 residues: Lipoate-protein ligase A (338 aa).

The BPL/LPL catalytic domain maps to 29 to 216 (PATQRVLFLW…AFFAHYGERV (188 aa)). Residues arginine 71, 76–79 (GAVF), and lysine 134 each bind ATP. Lysine 134 serves as a coordination point for (R)-lipoate.

The protein belongs to the LplA family. In terms of assembly, monomer.

It localises to the cytoplasm. It catalyses the reaction L-lysyl-[lipoyl-carrier protein] + (R)-lipoate + ATP = N(6)-[(R)-lipoyl]-L-lysyl-[lipoyl-carrier protein] + AMP + diphosphate + H(+). It functions in the pathway protein modification; protein lipoylation via exogenous pathway; protein N(6)-(lipoyl)lysine from lipoate: step 1/2. It participates in protein modification; protein lipoylation via exogenous pathway; protein N(6)-(lipoyl)lysine from lipoate: step 2/2. Its function is as follows. Catalyzes both the ATP-dependent activation of exogenously supplied lipoate to lipoyl-AMP and the transfer of the activated lipoyl onto the lipoyl domains of lipoate-dependent enzymes. The protein is Lipoate-protein ligase A of Escherichia coli O81 (strain ED1a).